Reading from the N-terminus, the 172-residue chain is Endoribonuclease YbeY (172 aa).

Positions 134, 138, and 144 each coordinate Zn(2+).

The protein belongs to the endoribonuclease YbeY family. Zn(2+) is required as a cofactor.

It is found in the cytoplasm. In terms of biological role, single strand-specific metallo-endoribonuclease involved in late-stage 70S ribosome quality control and in maturation of the 3' terminus of the 16S rRNA. The chain is Endoribonuclease YbeY from Burkholderia cenocepacia (strain HI2424).